The primary structure comprises 142 residues: Coactosin-like protein (142 aa).

A2 bears the N-acetylalanine mark. Residues 2–130 (ATKIDKEACR…EEDFIRSELK (129 aa)) enclose the ADF-H domain. S23 carries the phosphoserine modification. The tract at residues 66 to 75 (TGDAMSKRSK) is flexible and important for F-actin binding. The residue at position 102 (K102) is an N6-acetyllysine. Phosphoserine is present on S141.

This sequence belongs to the actin-binding proteins ADF family. Coactosin subfamily. In terms of assembly, interacts with 5-lipoxygenase (ALOX5/5LO) in a calcium-independent manner. Binds to F-actin with a stoichiometry of 1:2.

The protein localises to the cytoplasm. The protein resides in the cytoskeleton. Its subcellular location is the nucleus. In terms of biological role, binds to F-actin in a calcium-independent manner. Has no direct effect on actin depolymerization. Acts as a chaperone for ALOX5 (5LO), influencing both its stability and activity in leukotrienes synthesis. The polypeptide is Coactosin-like protein (Rattus norvegicus (Rat)).